The primary structure comprises 207 residues: Large ribosomal subunit protein bL25 (207 aa).

This sequence belongs to the bacterial ribosomal protein bL25 family. CTC subfamily. In terms of assembly, part of the 50S ribosomal subunit; part of the 5S rRNA/L5/L18/L25 subcomplex. Contacts the 5S rRNA. Binds to the 5S rRNA independently of L5 and L18.

Functionally, this is one of the proteins that binds to the 5S RNA in the ribosome where it forms part of the central protuberance. In Paraburkholderia xenovorans (strain LB400), this protein is Large ribosomal subunit protein bL25.